A 374-amino-acid chain; its full sequence is Flagellar P-ring protein 1 (374 aa).

The signal sequence occupies residues Met-1–Ala-26.

It belongs to the FlgI family. As to quaternary structure, the basal body constitutes a major portion of the flagellar organelle and consists of four rings (L,P,S, and M) mounted on a central rod.

The protein resides in the periplasm. The protein localises to the bacterial flagellum basal body. Its function is as follows. Assembles around the rod to form the L-ring and probably protects the motor/basal body from shearing forces during rotation. The chain is Flagellar P-ring protein 1 from Photobacterium profundum (strain SS9).